The following is a 400-amino-acid chain: Enoyl-[acyl-carrier-protein] reductase [NADH] 1 (400 aa).

NAD(+)-binding positions include 48–53, 74–75, 111–112, and 139–140; these read GASSGY, FE, DA, and LA. Tyr-225 contributes to the substrate binding site. Tyr-235 functions as the Proton donor in the catalytic mechanism. NAD(+)-binding positions include Lys-244 and 273–275; that span reads VVT.

Belongs to the TER reductase family. As to quaternary structure, monomer.

The catalysed reaction is a 2,3-saturated acyl-[ACP] + NAD(+) = a (2E)-enoyl-[ACP] + NADH + H(+). It functions in the pathway lipid metabolism; fatty acid biosynthesis. In terms of biological role, involved in the final reduction of the elongation cycle of fatty acid synthesis (FAS II). Catalyzes the reduction of a carbon-carbon double bond in an enoyl moiety that is covalently linked to an acyl carrier protein (ACP). The sequence is that of Enoyl-[acyl-carrier-protein] reductase [NADH] 1 from Vibrio vulnificus (strain YJ016).